Reading from the N-terminus, the 462-residue chain is Cytokine-like nuclear factor N-PAC (462 aa).

A PWWP domain is found at 8-66; sequence IGDLVWGKLGRYPPWPGKVVSPPKDLKKPRGKKCFFVKFFGTEDHAWIKVEQLKPYHPH. Residues 91–111 show a composition bias toward basic and acidic residues; the sequence is KKAKGKDQSHSDDKSKSDKGR. The disordered stretch occupies residues 91–139; the sequence is KKAKGKDQSHSDDKSKSDKGRKAAKPMKIIEEDDEDAFKGGSSDKPASS. A dehydrogenase domain region spans residues 169–462; that stretch reads GSITPTDKRI…MSAVYRAYIH (294 aa). Residues 179–193, Thr-270, and Lys-414 contribute to the NAD(+) site; that span reads GFLG…VVSN.

It belongs to the HIBADH-related family. NP60 subfamily. As to quaternary structure, homotetramere. Binds to mononucleosomes.

The protein resides in the nucleus. Its subcellular location is the chromosome. May have oxidoreductase activity. Regulates p38 MAP kinase activity by mediating stress activation of mapk14 and specifically regulating mapk14 signaling. In terms of biological role, cytokine-like nuclear factor with chromatin gene reader activity involved in chromatin modification and regulation of gene expression. Acts as a nucleosome-destabilizing factor that is recruited to genes during transcriptional activation. Recognizes and binds histone H3 without a preference for specific epigenetic markers and also binds DNA. Interacts with KDM1B and promotes its histone demethylase activity by facilitating the capture of H3 tails, they form a multifunctional enzyme complex that modifies transcribed chromatin and facilitates Pol II transcription through nucleosomes. This chain is Cytokine-like nuclear factor N-PAC (glyr1), found in Danio rerio (Zebrafish).